A 232-amino-acid polypeptide reads, in one-letter code: Small ribosomal subunit protein uS3 (232 aa).

The 69-residue stretch at 39-107 (VRQFLTKELQ…PAQINIAEVR (69 aa)) folds into the KH type-2 domain. Residues 213–232 (AANAVEPKGDKPKKQRKGRK) are disordered.

Belongs to the universal ribosomal protein uS3 family. In terms of assembly, part of the 30S ribosomal subunit. Forms a tight complex with proteins S10 and S14.

Binds the lower part of the 30S subunit head. Binds mRNA in the 70S ribosome, positioning it for translation. The chain is Small ribosomal subunit protein uS3 from Vibrio campbellii (strain ATCC BAA-1116).